A 358-amino-acid polypeptide reads, in one-letter code: Nicotinate-nucleotide--dimethylbenzimidazole phosphoribosyltransferase (358 aa).

Catalysis depends on Glu-314, which acts as the Proton acceptor.

The protein belongs to the CobT family.

It carries out the reaction 5,6-dimethylbenzimidazole + nicotinate beta-D-ribonucleotide = alpha-ribazole 5'-phosphate + nicotinate + H(+). Its pathway is nucleoside biosynthesis; alpha-ribazole biosynthesis; alpha-ribazole from 5,6-dimethylbenzimidazole: step 1/2. Catalyzes the synthesis of alpha-ribazole-5'-phosphate from nicotinate mononucleotide (NAMN) and 5,6-dimethylbenzimidazole (DMB). This is Nicotinate-nucleotide--dimethylbenzimidazole phosphoribosyltransferase from Mycobacterium ulcerans (strain Agy99).